A 291-amino-acid polypeptide reads, in one-letter code: 4-diphosphocytidyl-2-C-methyl-D-erythritol kinase (291 aa).

Residue Lys10 is part of the active site. 99-109 (PMGGGLGGGSS) is an ATP binding site. Residue Asp141 is part of the active site.

This sequence belongs to the GHMP kinase family. IspE subfamily. As to quaternary structure, homodimer.

The enzyme catalyses 4-CDP-2-C-methyl-D-erythritol + ATP = 4-CDP-2-C-methyl-D-erythritol 2-phosphate + ADP + H(+). Its pathway is isoprenoid biosynthesis; isopentenyl diphosphate biosynthesis via DXP pathway; isopentenyl diphosphate from 1-deoxy-D-xylulose 5-phosphate: step 3/6. Functionally, catalyzes the phosphorylation of the position 2 hydroxy group of 4-diphosphocytidyl-2C-methyl-D-erythritol. This Photorhabdus laumondii subsp. laumondii (strain DSM 15139 / CIP 105565 / TT01) (Photorhabdus luminescens subsp. laumondii) protein is 4-diphosphocytidyl-2-C-methyl-D-erythritol kinase.